A 277-amino-acid polypeptide reads, in one-letter code: MELIEKHASFGGWQNVYRHYSQSLKCEMNVGVYLPPKAANEKLPVLYWLSGLTCNEQNFITKSGMQRYAAEHNIIVVAPDTSPRGSHVADADRYDLGQGAGFYLNATQAPWNEHYKMYDYIRNELPDLVMHHFPATAKKSISGHSMGGLGALVLALRNPDEYVSVSAFSPIVSPSQVPWGQQAFAAYLAENKDAWLDYDPVSLISQGQRVAEIMVDQGLSDDFYAEQLRTPNLEKICQEMNIKTLIRYHEGYDHSYYFVSSFIGEHIAYHANKLNMR.

Catalysis depends on charge relay system residues S145, D221, and H254.

The protein belongs to the esterase D family.

It catalyses the reaction S-formylglutathione + H2O = formate + glutathione + H(+). Its function is as follows. Serine hydrolase involved in the detoxification of formaldehyde. Hydrolyzes S-formylglutathione to glutathione and formate. The sequence is that of S-formylglutathione hydrolase FrmB (frmB) from Escherichia coli (strain ATCC 8739 / DSM 1576 / NBRC 3972 / NCIMB 8545 / WDCM 00012 / Crooks).